An 88-amino-acid chain; its full sequence is Putative membrane protein insertion efficiency factor (88 aa).

The protein belongs to the UPF0161 family.

Its subcellular location is the cell inner membrane. Its function is as follows. Could be involved in insertion of integral membrane proteins into the membrane. This chain is Putative membrane protein insertion efficiency factor, found in Koribacter versatilis (strain Ellin345).